The primary structure comprises 213 residues: Ribonuclease HII (213 aa).

One can recognise an RNase H type-2 domain in the interval 25 to 213 (KTLCGVDEAG…FKPVKQLLPH (189 aa)). The a divalent metal cation site is built by Asp-31, Glu-32, and Asp-124.

It belongs to the RNase HII family. The cofactor is Mn(2+). Requires Mg(2+) as cofactor.

The protein localises to the cytoplasm. It catalyses the reaction Endonucleolytic cleavage to 5'-phosphomonoester.. Endonuclease that specifically degrades the RNA of RNA-DNA hybrids. The chain is Ribonuclease HII from Magnetococcus marinus (strain ATCC BAA-1437 / JCM 17883 / MC-1).